The sequence spans 474 residues: Adenosylhomocysteinase (474 aa).

Substrate-binding residues include threonine 61, aspartate 136, and glutamate 196. 197–199 contributes to the NAD(+) binding site; sequence TTT. 2 residues coordinate substrate: lysine 226 and aspartate 230. NAD(+)-binding positions include asparagine 231, 260–265, glutamate 283, asparagine 318, 339–341, and asparagine 384; these read GYGDVG and IGH.

It belongs to the adenosylhomocysteinase family. NAD(+) is required as a cofactor.

It is found in the cytoplasm. It catalyses the reaction S-adenosyl-L-homocysteine + H2O = L-homocysteine + adenosine. It participates in amino-acid biosynthesis; L-homocysteine biosynthesis; L-homocysteine from S-adenosyl-L-homocysteine: step 1/1. Functionally, may play a key role in the regulation of the intracellular concentration of adenosylhomocysteine. The chain is Adenosylhomocysteinase from Ralstonia pickettii (strain 12J).